The chain runs to 220 residues: Iron-sulfur cluster repair protein YtfE (220 aa).

It belongs to the RIC family. YtfE subfamily. Homodimer.

The protein localises to the cytoplasm. Di-iron-containing protein involved in the repair of iron-sulfur clusters damaged by oxidative and nitrosative stress conditions. The chain is Iron-sulfur cluster repair protein YtfE from Escherichia coli O157:H7.